The sequence spans 249 residues: Adapter protein MecA (249 aa).

Belongs to the MecA family. As to quaternary structure, homodimer.

Its function is as follows. Enables the recognition and targeting of unfolded and aggregated proteins to the ClpC protease or to other proteins involved in proteolysis. The sequence is that of Adapter protein MecA from Streptococcus thermophilus (strain CNRZ 1066).